The sequence spans 409 residues: Protein ROOT PRIMORDIUM DEFECTIVE 1 (409 aa).

In terms of domain architecture, PORR spans V47 to P386.

In terms of tissue distribution, expressed in roots, hypocotyls, cotyledons and shoot apex.

Its function is as follows. Involved in pre-arranging the maintenance of the active cell proliferation during root primordium development. Does not seem to be involved in cell cycle progression. This Arabidopsis thaliana (Mouse-ear cress) protein is Protein ROOT PRIMORDIUM DEFECTIVE 1 (RPD1).